We begin with the raw amino-acid sequence, 329 residues long: Cathepsin K (329 aa).

The signal sequence occupies residues 1 to 15 (MWGLKVLLLPVMSFA). The propeptide at 16–114 (LYPEEILDTH…TLYIPDWEGR (99 aa)) is activation peptide. Asn-103 carries an N-linked (GlcNAc...) asparagine glycan. Intrachain disulfides connect Cys-136–Cys-177, Cys-170–Cys-210, and Cys-269–Cys-318. Cys-139 is a catalytic residue. Active-site residues include His-276 and Asn-296.

This sequence belongs to the peptidase C1 family.

The protein resides in the lysosome. The protein localises to the secreted. It localises to the apical cell membrane. It carries out the reaction Broad proteolytic activity. With small-molecule substrates and inhibitors, the major determinant of specificity is P2, which is preferably Leu, Met &gt; Phe, and not Arg.. In terms of biological role, thiol protease involved in osteoclastic bone resorption and may participate partially in the disorder of bone remodeling. Displays potent endoprotease activity against fibrinogen at acid pH. May play an important role in extracellular matrix degradation. Involved in the release of thyroid hormone thyroxine (T4) by limited proteolysis of TG/thyroglobulin in the thyroid follicle lumen. This chain is Cathepsin K (CTSK), found in Macaca fascicularis (Crab-eating macaque).